The chain runs to 300 residues: Sulfate adenylyltransferase subunit 2 (300 aa).

The protein belongs to the PAPS reductase family. CysD subfamily. As to quaternary structure, heterodimer composed of CysD, the smaller subunit, and CysN.

It carries out the reaction sulfate + ATP + H(+) = adenosine 5'-phosphosulfate + diphosphate. It functions in the pathway sulfur metabolism; hydrogen sulfide biosynthesis; sulfite from sulfate: step 1/3. In terms of biological role, with CysN forms the ATP sulfurylase (ATPS) that catalyzes the adenylation of sulfate producing adenosine 5'-phosphosulfate (APS) and diphosphate, the first enzymatic step in sulfur assimilation pathway. APS synthesis involves the formation of a high-energy phosphoric-sulfuric acid anhydride bond driven by GTP hydrolysis by CysN coupled to ATP hydrolysis by CysD. The chain is Sulfate adenylyltransferase subunit 2 from Magnetococcus marinus (strain ATCC BAA-1437 / JCM 17883 / MC-1).